Here is a 284-residue protein sequence, read N- to C-terminus: Tropomyosin (284 aa).

A coiled-coil region spans residues 1-284; the sequence is MDAIKKKMLA…DSTFAELAGY (284 aa). The tract at residues 105 to 131 is disordered; it reads RLQSATEKLEEASKAADESERGRKVLE.

This sequence belongs to the tropomyosin family. As to quaternary structure, homodimer.

Tropomyosin, in association with the troponin complex, plays a central role in the calcium dependent regulation of muscle contraction. The sequence is that of Tropomyosin from Cornu aspersum (Brown garden snail).